Consider the following 555-residue polypeptide: Ribonuclease J2 (555 aa).

Positions 74, 76, 142, and 164 each coordinate Zn(2+). Substrate is bound at residue 364–368; sequence HVSGH.

It belongs to the metallo-beta-lactamase superfamily. RNA-metabolizing metallo-beta-lactamase-like family. Bacterial RNase J subfamily. In terms of assembly, unclear whether it forms homodimers or belongs to a larger complex. According to probably does not form homodimers, while shows homodimer formation. Both reports show RNase J1 and J2 interaction, probably as a heterotetramer shows it is a component of a possible RNA degradosome complex composed of rny, rnjA, rnjB, pnp, pfkA and eno, while finds no evidence of an RNA degradosome complex. It depends on Zn(2+) as a cofactor.

The protein localises to the cytoplasm. Its function is as follows. Endonucleolytically cleaves the 5'-leader sequence of certain mRNAs. Endonuclease digestion by the RNase J1/J2 complex occurs at a different site and in some cases more efficiently than J1 or J2 alone. The exonuclease activity of the J1/J2 complex is highly processive on substrates longer than 5 nucleotides, on shorter substrates is distributive. Plays a role in mRNA maturation and stability. Appears to have a limited effect on 16S rRNA maturation, despite its similarity to RNase J1. This subunit alone has very poor 5'-3' exonuclease activity. The protein is Ribonuclease J2 of Bacillus subtilis (strain 168).